We begin with the raw amino-acid sequence, 355 residues long: Probable low-specificity L-threonine aldolase 2 (355 aa).

The residue at position 211 (Lys211) is an N6-(pyridoxal phosphate)lysine.

The protein belongs to the threonine aldolase family. Pyridoxal 5'-phosphate serves as cofactor. Expressed in roots, leaf vasculature and flowers.

It carries out the reaction L-threonine = acetaldehyde + glycine. The enzyme catalyses L-allo-threonine = acetaldehyde + glycine. It functions in the pathway amino-acid degradation; L-threonine degradation via aldolase pathway; acetaldehyde and glycine from L-threonine: step 1/1. Its function is as follows. Threonine aldolase involved in threonine degradation to glycine. May play a role in the removal of L-allo-threonine. The chain is Probable low-specificity L-threonine aldolase 2 (THA2) from Arabidopsis thaliana (Mouse-ear cress).